The sequence spans 659 residues: UvrABC system protein B (659 aa).

Positions 25–412 (QSIENGNRGQ…SEIVAEQIIR (388 aa)) constitute a Helicase ATP-binding domain. 38–45 (GVTGSGKT) contacts ATP. The Beta-hairpin motif lies at 91-114 (YYDYYQPEAYVPQTDTFIEKDASI). A Helicase C-terminal domain is found at 429 to 582 (QIDDLYGEIQ…QMEYNEEHNI (154 aa)). The 36-residue stretch at 622–657 (EKLIEQYEEEMKEAAKNLQFERAAELRDIIKDLKEN) folds into the UVR domain.

Belongs to the UvrB family. In terms of assembly, forms a heterotetramer with UvrA during the search for lesions. Interacts with UvrC in an incision complex.

The protein resides in the cytoplasm. Functionally, the UvrABC repair system catalyzes the recognition and processing of DNA lesions. A damage recognition complex composed of 2 UvrA and 2 UvrB subunits scans DNA for abnormalities. Upon binding of the UvrA(2)B(2) complex to a putative damaged site, the DNA wraps around one UvrB monomer. DNA wrap is dependent on ATP binding by UvrB and probably causes local melting of the DNA helix, facilitating insertion of UvrB beta-hairpin between the DNA strands. Then UvrB probes one DNA strand for the presence of a lesion. If a lesion is found the UvrA subunits dissociate and the UvrB-DNA preincision complex is formed. This complex is subsequently bound by UvrC and the second UvrB is released. If no lesion is found, the DNA wraps around the other UvrB subunit that will check the other stand for damage. The polypeptide is UvrABC system protein B (Clostridium perfringens (strain 13 / Type A)).